A 243-amino-acid chain; its full sequence is uncharacterized protein (243 aa).

Positions 1–16 (MKHFIILFLLLFVTAG) are cleaved as a signal peptide. The N-palmitoyl cysteine moiety is linked to residue Cys-17. A lipid anchor (S-diacylglycerol cysteine) is attached at Cys-17.

It localises to the cell membrane. This is an uncharacterized protein from Bacillus subtilis (strain 168).